A 926-amino-acid polypeptide reads, in one-letter code: Protein translocase subunit SecA (926 aa).

ATP contacts are provided by residues Gln-87, 105-109, and Asp-512; that span reads GEGKT. Positions 911, 913, 922, and 923 each coordinate Zn(2+).

This sequence belongs to the SecA family. Monomer and homodimer. Part of the essential Sec protein translocation apparatus which comprises SecA, SecYEG and auxiliary proteins SecDF-YajC and YidC. Zn(2+) is required as a cofactor.

The protein localises to the cell inner membrane. Its subcellular location is the cytoplasm. It catalyses the reaction ATP + H2O + cellular proteinSide 1 = ADP + phosphate + cellular proteinSide 2.. Its function is as follows. Part of the Sec protein translocase complex. Interacts with the SecYEG preprotein conducting channel. Has a central role in coupling the hydrolysis of ATP to the transfer of proteins into and across the cell membrane, serving both as a receptor for the preprotein-SecB complex and as an ATP-driven molecular motor driving the stepwise translocation of polypeptide chains across the membrane. The chain is Protein translocase subunit SecA from Psychrobacter cryohalolentis (strain ATCC BAA-1226 / DSM 17306 / VKM B-2378 / K5).